The chain runs to 385 residues: Polyketide synthase 2 (385 aa).

Cys-157 is an active-site residue.

This sequence belongs to the thiolase-like superfamily. Chalcone/stilbene synthases family. As to expression, expressed in leaves and glandular trichomes.

It localises to the cytoplasm. Polyketide synthase responsible for the biosynthesis of secondary metabolites. The polypeptide is Polyketide synthase 2 (PKSG2) (Cannabis sativa (Hemp)).